We begin with the raw amino-acid sequence, 430 residues long: Serine--tRNA ligase (430 aa).

Residue 237 to 239 (TAE) participates in L-serine binding. 268-270 (RAE) is an ATP binding site. Glu-291 serves as a coordination point for L-serine. 355–358 (EVSS) is an ATP binding site. Ser-391 is a binding site for L-serine.

This sequence belongs to the class-II aminoacyl-tRNA synthetase family. Type-1 seryl-tRNA synthetase subfamily. In terms of assembly, homodimer. The tRNA molecule binds across the dimer.

It is found in the cytoplasm. The catalysed reaction is tRNA(Ser) + L-serine + ATP = L-seryl-tRNA(Ser) + AMP + diphosphate + H(+). The enzyme catalyses tRNA(Sec) + L-serine + ATP = L-seryl-tRNA(Sec) + AMP + diphosphate + H(+). It participates in aminoacyl-tRNA biosynthesis; selenocysteinyl-tRNA(Sec) biosynthesis; L-seryl-tRNA(Sec) from L-serine and tRNA(Sec): step 1/1. Functionally, catalyzes the attachment of serine to tRNA(Ser). Is also able to aminoacylate tRNA(Sec) with serine, to form the misacylated tRNA L-seryl-tRNA(Sec), which will be further converted into selenocysteinyl-tRNA(Sec). The protein is Serine--tRNA ligase of Baumannia cicadellinicola subsp. Homalodisca coagulata.